A 465-amino-acid polypeptide reads, in one-letter code: GDNF family receptor alpha-1 (465 aa).

An N-terminal signal peptide occupies residues 1 to 24 (MFLATLYFALPLLDLLLSAEVSGG). 3 repeat units span residues 25–113 (DRLD…LQGN), 150–238 (KGNN…YEER), and 239–342 (EKPN…KNAI). A disulfide bridge links Cys36 with Cys42. Asn59 carries N-linked (GlcNAc...) asparagine glycosylation. 10 disulfide bridges follow: Cys154–Cys214, Cys161–Cys167, Cys178–Cys192, Cys187–Cys233, Cys216–Cys221, Cys243–Cys313, Cys250–Cys256, Cys267–Cys285, Cys277–Cys337, and Cys315–Cys325. Residues Asn347 and Asn406 are each glycosylated (N-linked (GlcNAc...) asparagine). Ser429 carries the GPI-anchor amidated serine lipid modification. Positions 430–465 (HITTKSMAAPPSCGLSPLLVLVVTALSTLLSLTETS) are cleaved as a propeptide — removed in mature form.

This sequence belongs to the GDNFR family. As to quaternary structure, interacts with GDNF ligand and RET: forms a 2:2:2 ternary complex composed of GDNF ligand, GFRA1 and RET receptor. Interacts with SORL1, either alone or in complex with GDNF. Interaction between SORL1 and GFRA1 leads to GFRA1 internalization, but not degradation.

Its subcellular location is the cell membrane. It is found in the golgi apparatus. It localises to the trans-Golgi network. The protein resides in the endosome. The protein localises to the multivesicular body. Functionally, coreceptor for GDNF, a neurotrophic factor that enhances survival and morphological differentiation of dopaminergic neurons and increases their high-affinity dopamine uptake. GDNF-binding leads to autophosphorylation and activation of the RET receptor. This Homo sapiens (Human) protein is GDNF family receptor alpha-1 (GFRA1).